The chain runs to 690 residues: Iron-regulated transcriptional activator AFT1 (690 aa).

The disordered stretch occupies residues 1 to 21 (MEGFNPADIEHASPINSSDSH). Asp-110 is a binding site for Zn(2+). The DNA site is built by Lys-111, Lys-115, Ile-131, Glu-132, Arg-133, Ser-134, Asp-135, and Lys-138. A Zn(2+)-binding site is contributed by Cys-143. Basic residues predominate over residues 148 to 159 (RGRNARRKRKDK). Residues 148–205 (RGRNARRKRKDKPKGQDHEDEKSKINDDELEYASPSNATVTNGPQTSPDQTSSIKPKK) form a disordered region. The span at 160 to 174 (PKGQDHEDEKSKIND) shows a compositional bias: basic and acidic residues. The segment covering 181-201 (SPSNATVTNGPQTSPDQTSSI) has biased composition (polar residues). Position 215 (Cys-215) interacts with Zn(2+). DNA is bound at residue Lys-226. The Zn(2+) site is built by His-239 and His-241. Asn-263 provides a ligand contact to DNA. Positions 291-293 (CDC) match the CDC [2Fe-2S] cluster binding motif motif. Disordered stretches follow at residues 335 to 357 (PCLP…PKSQ) and 612 to 655 (SSNE…VQKD). Residues 339-351 (SVNNTGSINTNNV) are compositionally biased toward polar residues. The segment covering 621–638 (HQYGPQQQPPQQLQYHQN) has biased composition (low complexity). Over residues 639 to 649 (QPHDGHNHEQH) the composition is skewed to basic and acidic residues.

In terms of assembly, homodimer. Dimerization decreases the DNA-binding activity.

The protein resides in the nucleus. Dimerization via the binding of Fe(2+) or a [2Fe-2S] cluster decreases the DNA-binding activity. In terms of biological role, transcription factor that activates the genes for FRE1, FRE2 and FET3 in response to iron deprivationand thereby plays a central role in iron homeostasis. Also required for the expression of LSO1. Recognizes the consensus iron-responsive element (Fe-RE) sequence 5'-CACCC-3' in the promoters of target genes. Iron could interact directly with AFT1 and inhibits its activity. In high iron condition, the presence of Fe(2+) or [2Fe-2S] cluster leads to dimerization, which in turn leads to a decrease in DNA affinity. This is Iron-regulated transcriptional activator AFT1 from Saccharomyces cerevisiae (strain ATCC 204508 / S288c) (Baker's yeast).